A 281-amino-acid polypeptide reads, in one-letter code: MAIKKYKPTTNGRRNMTSIDYKATLTTSTPEKSLLAAKNSKAGRNNRGLITTRHKGGGHKQKYRIIDFKRNKRDVVGTIATIEYDPNRNAFICLVNYLDGEKRYILFAKGMTVGMKIVASEHADIKVGNAAPLKNIPEGTLIHNVELKPGKGGQMARSAGTSVQILGKDDDGKYVTLRLTSGEVRKVLADCYATIGEVGNEEYNLVNWGKAGRNRWRGIRPTVRGSVMNPNDHPHGGGEGRTPIGRKSPVTPWGKKALGVKTRNTKKPSEKLIVRKRNAKK.

Residues 222–281 (TVRGSVMNPNDHPHGGGEGRTPIGRKSPVTPWGKKALGVKTRNTKKPSEKLIVRKRNAKK) are disordered.

It belongs to the universal ribosomal protein uL2 family. Part of the 50S ribosomal subunit. Forms a bridge to the 30S subunit in the 70S ribosome.

In terms of biological role, one of the primary rRNA binding proteins. Required for association of the 30S and 50S subunits to form the 70S ribosome, for tRNA binding and peptide bond formation. It has been suggested to have peptidyltransferase activity; this is somewhat controversial. Makes several contacts with the 16S rRNA in the 70S ribosome. The chain is Large ribosomal subunit protein uL2 from Mesoplasma florum (strain ATCC 33453 / NBRC 100688 / NCTC 11704 / L1) (Acholeplasma florum).